Reading from the N-terminus, the 287-residue chain is SPX domain-containing protein 2 (287 aa).

Positions 1–162 (MKFGKSLSNQ…GALIRLPFIQ (162 aa)) constitute an SPX domain. Over residues 36 to 50 (EPRSVENRPNKRSRS) the composition is skewed to basic and acidic residues. 2 disordered regions span residues 36–61 (EPRSVENRPNKRSRSDSNSVDTDPTV) and 194–213 (KSRNLDEEGEPTTSGMVKTG).

The protein resides in the nucleus. Functionally, may inhibit PHR1 DNA-binding activity in a Pi-dependent manner. The sequence is that of SPX domain-containing protein 2 from Arabidopsis thaliana (Mouse-ear cress).